A 122-amino-acid chain; its full sequence is Prefoldin subunit 1 (122 aa).

Ala2 is subject to N-acetylalanine.

This sequence belongs to the prefoldin subunit beta family. In terms of assembly, heterohexamer of two PFD-alpha type and four PFD-beta type subunits.

In terms of biological role, binds specifically to cytosolic chaperonin (c-CPN) and transfers target proteins to it. Binds to nascent polypeptide chain and promotes folding in an environment in which there are many competing pathways for nonnative proteins. This chain is Prefoldin subunit 1 (PFDN1), found in Pongo abelii (Sumatran orangutan).